Reading from the N-terminus, the 294-residue chain is Ribosomal protein L11 methyltransferase (294 aa).

The S-adenosyl-L-methionine site is built by T145, G167, D189, and N230.

This sequence belongs to the methyltransferase superfamily. PrmA family.

The protein resides in the cytoplasm. It carries out the reaction L-lysyl-[protein] + 3 S-adenosyl-L-methionine = N(6),N(6),N(6)-trimethyl-L-lysyl-[protein] + 3 S-adenosyl-L-homocysteine + 3 H(+). Its function is as follows. Methylates ribosomal protein L11. The sequence is that of Ribosomal protein L11 methyltransferase from Alkalilimnicola ehrlichii (strain ATCC BAA-1101 / DSM 17681 / MLHE-1).